A 125-amino-acid polypeptide reads, in one-letter code: Subtelomeric hrmA-associated cluster protein cgnA (125 aa).

G-Q-I/R/S repeat units follow at residues 11–13 (GQI), 14–16 (GPI), 17–19 (GQR), 20–22 (GQS), 23–25 (GQR), 26–28 (GQS), 29–31 (GQR), 32–34 (GQS), 35–37 (GQI), 38–40 (GQS), 41–43 (GQS), 44–46 (GQS), 47–49 (GQS), 50–52 (GQS), 53–55 (GQI), 56–58 (GQI), 59–61 (GQI), 62–64 (GQI), 65–67 (GQI), 68–70 (GQI), 71–73 (GQI), 74–76 (GQI), and 77–79 (GQA). The tract at residues 11–79 (GQIGPIGQRG…IGQIGQIGQA (69 aa)) is 23 X 3 AA approximate tandem repeats of G-Q-I/R/S. A disordered region spans residues 15–57 (PIGQRGQSGQRGQSGQRGQSGQIGQSGQSGQSGQSGQSGQIGQ).

Its subcellular location is the secreted. Its function is as follows. Hypoxia responsive morphology factor that modulates the expression of the subtelomeric hrmA-associated cluster (HAC) containing genes that alter the hyphal surface (such as reduced total chitin or increased beta-glucan exposure) and perturb inter-hyphal interactions within the developing biofilms, resulting in a loss of vertically aligned polarized growing filaments. Consequently, this hypoxia-typic morphotype (called H-MORPH) with altered biofilm architecture leads to increased hypoxia fitness, increased host inflammation, rapid disease progression, and mortality in a murine model of invasive aspergillosis. GcnA is directly involved in the reduction total surface chitin and the increase beta-glucan exposure, and mediates the detachment of the extracellular matrix and especially of its component galactosaminogalactan (GAG). The sequence is that of Subtelomeric hrmA-associated cluster protein cgnA from Aspergillus fumigatus (strain CBS 144.89 / FGSC A1163 / CEA10) (Neosartorya fumigata).